The sequence spans 103 residues: Small ribosomal subunit protein uS10 (103 aa).

It belongs to the universal ribosomal protein uS10 family. Part of the 30S ribosomal subunit.

Its function is as follows. Involved in the binding of tRNA to the ribosomes. In Cellvibrio japonicus (strain Ueda107) (Pseudomonas fluorescens subsp. cellulosa), this protein is Small ribosomal subunit protein uS10.